The chain runs to 328 residues: Glutathionyl-hydroquinone reductase YqjG (328 aa).

Cysteine 63 functions as the Nucleophile in the catalytic mechanism. Residues tryptophan 96, 130 to 133 (RVTV), and 148 to 149 (ES) contribute to the glutathione site. In terms of domain architecture, GST C-terminal spans 172 to 296 (PPALQTKIDE…VNFDHIRNHY (125 aa)). Tyrosine 195 functions as the Proton donor/acceptor in the catalytic mechanism. Residues 203-311 (QEAYDEAVAK…TINPTGIISI (109 aa)) form a dimerization region.

This sequence belongs to the GST superfamily. Xi-class GSH transferase family. In terms of assembly, homodimer.

The catalysed reaction is 2-(glutathione-S-yl)-hydroquinone + glutathione = hydroquinone + glutathione disulfide. Its function is as follows. Catalyzes glutathione (GSH)-dependent reduction of glutathionyl-hydroquinones (GS-HQs) to the corresponding hydroquinones. Can use a variety of GS-HQs as substrates, such as GS-p-hydroquinone (GS-HQ), GS-hydroxy-p-hydroquinone (GS-HHQ), GS-methyl-p-hydroquinone (GS-MHQ), GS-menadiol, and GS-trichloro-p-hydroquinone (GS-TriCH). Also displays GSH-dependent disulfide-bond reduction activity toward HED (2-hydroxyethyl disulfide), and is able to catalyze DMA (dimethylarsinate) reduction. Exhibits no GSH transferase activity with 1-chloro-2,4-dinitrobenzene (CDNB). This Escherichia coli (strain K12) protein is Glutathionyl-hydroquinone reductase YqjG (yqjG).